Here is a 649-residue protein sequence, read N- to C-terminus: Acetyl-coenzyme A synthetase (649 aa).

Residues 191 to 194 (RGGR), Thr-309, and Asn-333 each bind CoA. ATP-binding positions include 385–387 (GEP), 409–414 (DTWWQT), Asp-498, and Arg-513. Ser-521 contacts CoA. Arg-524 serves as a coordination point for ATP. Val-535, His-537, and Val-540 together coordinate Mg(2+). Arg-582 serves as a coordination point for CoA. An N6-acetyllysine modification is found at Lys-607.

The protein belongs to the ATP-dependent AMP-binding enzyme family. Mg(2+) is required as a cofactor. Acetylated. Deacetylation by the SIR2-homolog deacetylase activates the enzyme.

The catalysed reaction is acetate + ATP + CoA = acetyl-CoA + AMP + diphosphate. Functionally, catalyzes the conversion of acetate into acetyl-CoA (AcCoA), an essential intermediate at the junction of anabolic and catabolic pathways. AcsA undergoes a two-step reaction. In the first half reaction, AcsA combines acetate with ATP to form acetyl-adenylate (AcAMP) intermediate. In the second half reaction, it can then transfer the acetyl group from AcAMP to the sulfhydryl group of CoA, forming the product AcCoA. In Novosphingobium aromaticivorans (strain ATCC 700278 / DSM 12444 / CCUG 56034 / CIP 105152 / NBRC 16084 / F199), this protein is Acetyl-coenzyme A synthetase.